The primary structure comprises 287 residues: Acetyl-coenzyme A carboxylase carboxyl transferase subunit beta (287 aa).

In terms of domain architecture, CoA carboxyltransferase N-terminal spans 25-287; sequence IWTKCSGCVQ…KLTQQSFSEK (263 aa). Zn(2+) contacts are provided by cysteine 29, cysteine 32, cysteine 48, and cysteine 51. The C4-type zinc-finger motif lies at 29 to 51; it reads CSGCVQLLYTKELERNLQVCPKC.

Belongs to the AccD/PCCB family. Acetyl-CoA carboxylase is a heterohexamer composed of biotin carboxyl carrier protein (AccB), biotin carboxylase (AccC) and two subunits each of ACCase subunit alpha (AccA) and ACCase subunit beta (AccD). It depends on Zn(2+) as a cofactor.

The protein resides in the cytoplasm. It catalyses the reaction N(6)-carboxybiotinyl-L-lysyl-[protein] + acetyl-CoA = N(6)-biotinyl-L-lysyl-[protein] + malonyl-CoA. It participates in lipid metabolism; malonyl-CoA biosynthesis; malonyl-CoA from acetyl-CoA: step 1/1. Its function is as follows. Component of the acetyl coenzyme A carboxylase (ACC) complex. Biotin carboxylase (BC) catalyzes the carboxylation of biotin on its carrier protein (BCCP) and then the CO(2) group is transferred by the transcarboxylase to acetyl-CoA to form malonyl-CoA. The chain is Acetyl-coenzyme A carboxylase carboxyl transferase subunit beta from Blochmanniella floridana.